The sequence spans 212 residues: Adenine phosphoribosyltransferase (212 aa).

Belongs to the purine/pyrimidine phosphoribosyltransferase family. In terms of assembly, homodimer.

Its subcellular location is the cytoplasm. The catalysed reaction is AMP + diphosphate = 5-phospho-alpha-D-ribose 1-diphosphate + adenine. Its pathway is purine metabolism; AMP biosynthesis via salvage pathway; AMP from adenine: step 1/1. Catalyzes a salvage reaction resulting in the formation of AMP, that is energically less costly than de novo synthesis. The sequence is that of Adenine phosphoribosyltransferase from Mycobacterium tuberculosis (strain CDC 1551 / Oshkosh).